The primary structure comprises 156 residues: dCTP deaminase (156 aa).

Residues 79 to 84 (RSTFAR), Asp-95, Gln-124, and Tyr-138 each bind dCTP.

Belongs to the dCTP deaminase family. Homotrimer.

It carries out the reaction dCTP + H2O + H(+) = dUTP + NH4(+). It functions in the pathway pyrimidine metabolism; dUMP biosynthesis; dUMP from dCTP (dUTP route): step 1/2. Catalyzes the deamination of dCTP to dUTP. The polypeptide is dCTP deaminase (Thermococcus sibiricus (strain DSM 12597 / MM 739)).